The primary structure comprises 335 residues: Galactosylgalactosylxylosylprotein 3-beta-glucuronosyltransferase 1 (335 aa).

The Cytoplasmic portion of the chain corresponds to 1–6; the sequence is MPKRRD. An essential for transport from endoplasmic reticulum to Golgi apparatus and interaction with SAR1A region spans residues 3–5; sequence KRR. Residues 7-27 traverse the membrane as a helical; Signal-anchor for type II membrane protein segment; the sequence is ILAIVLIVLPWTLLVTVWHQS. Topologically, residues 28 to 335 are lumenal; the sequence is TIAPLLTTHK…KGFTDPTVEI (308 aa). Residue 92 to 94 participates in UDP-alpha-D-glucuronate binding; that stretch reads PTY. Phosphothreonine is present on residues Thr104 and Thr109. Asp123 is a binding site for UDP-alpha-D-glucuronate. Asn141 carries an N-linked (GlcNAc...) asparagine glycan. Residues Arg166 and Arg171 each contribute to the UDP-alpha-D-glucuronate site. The N-linked (GlcNAc...) asparagine glycan is linked to Asn185. 196–198 serves as a coordination point for UDP-alpha-D-glucuronate; it reads DDD. Asp198 contributes to the Mn(2+) binding site. Residues 246–255 form an interaction with galactose moiety of substrate glycoprotein region; it reads FDPHRPFAID. The Proton donor/acceptor role is filled by Glu285. Residue Asn304 is glycosylated (N-linked (GlcNAc...) asparagine). 312 to 314 provides a ligand contact to UDP-alpha-D-glucuronate; that stretch reads HTR.

The protein belongs to the glycosyltransferase 43 family. In terms of assembly, homodimer. Interacts with SAR1A. It depends on Mn(2+) as a cofactor. In terms of processing, the soluble form derives from the membrane form by proteolytic processing.

It localises to the golgi apparatus membrane. Its subcellular location is the secreted. It catalyses the reaction 3-O-(beta-D-galactosyl-(1-&gt;3)-beta-D-galactosyl-(1-&gt;4)-beta-D-xylosyl)-L-seryl-[protein] + UDP-alpha-D-glucuronate = 3-O-(beta-D-GlcA-(1-&gt;3)-beta-D-Gal-(1-&gt;3)-beta-D-Gal-(1-&gt;4)-beta-D-Xyl)-L-seryl-[protein] + UDP + H(+). Its pathway is protein modification; protein glycosylation. Its function is as follows. Involved in the biosynthesis of L2/HNK-1 carbohydrate epitope on glycoproteins. Can also play a role in glycosaminoglycan biosynthesis. Substrates include asialo-orosomucoid (ASOR), asialo-fetuin, and asialo-neural cell adhesion molecule. Requires sphingomyelin for activity: stearoyl-sphingomyelin was the most effective, followed by palmitoyl-sphingomyelin and lignoceroyl-sphingomyelin. Activity was demonstrated only for sphingomyelin with a saturated fatty acid and not for that with an unsaturated fatty acid, regardless of the length of the acyl group. The protein is Galactosylgalactosylxylosylprotein 3-beta-glucuronosyltransferase 1 of Canis lupus familiaris (Dog).